The primary structure comprises 634 residues: UPF0329 protein ECU07_1850/ECU10_0050 (634 aa).

Composition is skewed to basic and acidic residues over residues 354–365 (REEREKREESKG) and 397–407 (GESKEEDRGEE). Residues 354 to 438 (REEREKREES…KGSGEKRISE (85 aa)) form a disordered region. Acidic residues predominate over residues 408-417 (GGVEAEDPLE).

Belongs to the UPF0329 family.

The chain is UPF0329 protein ECU07_1850/ECU10_0050 from Encephalitozoon cuniculi (strain GB-M1) (Microsporidian parasite).